The sequence spans 106 residues: UPF0145 protein Daci_3728 (106 aa).

It belongs to the UPF0145 family.

This chain is UPF0145 protein Daci_3728, found in Delftia acidovorans (strain DSM 14801 / SPH-1).